A 365-amino-acid polypeptide reads, in one-letter code: Peptide chain release factor 2 (365 aa).

An N5-methylglutamine modification is found at glutamine 252.

It belongs to the prokaryotic/mitochondrial release factor family. Methylated by PrmC. Methylation increases the termination efficiency of RF2.

It localises to the cytoplasm. Its function is as follows. Peptide chain release factor 2 directs the termination of translation in response to the peptide chain termination codons UGA and UAA. The polypeptide is Peptide chain release factor 2 (Klebsiella pneumoniae (strain 342)).